The sequence spans 187 residues: Probable RNA 2'-phosphotransferase (187 aa).

Belongs to the KptA/TPT1 family.

Removes the 2'-phosphate from RNA via an intermediate in which the phosphate is ADP-ribosylated by NAD followed by a presumed transesterification to release the RNA and generate ADP-ribose 1''-2''-cyclic phosphate (APPR&gt;P). May function as an ADP-ribosylase. This chain is Probable RNA 2'-phosphotransferase, found in Pseudomonas syringae pv. tomato (strain ATCC BAA-871 / DC3000).